A 222-amino-acid chain; its full sequence is Cysteine protease inhibitor 1 (222 aa).

An N-terminal signal peptide occupies residues 1-26; that stretch reads MKSINILSFLLLSSTLSLVAFARSFT. Positions 27-42 are excised as a propeptide; it reads SENPIVLPTTCHDDDN. The Vacuolar targeting signal motif lies at 29–34; it reads NPIVLP. Cystine bridges form between Cys84-Cys136 and Cys185-Cys191.

It belongs to the protease inhibitor I3 (leguminous Kunitz-type inhibitor) family. In terms of tissue distribution, tubers, leaves.

Its subcellular location is the vacuole. Functionally, potent inhibitor of cathepsin l (cysteine protease). Does not inhibit trypsin or chymotrypsin (serine proteases). May protect the plant by inhibiting proteases of invading organisms. The polypeptide is Cysteine protease inhibitor 1 (Solanum tuberosum (Potato)).